Reading from the N-terminus, the 200-residue chain is dITP/XTP pyrophosphatase (200 aa).

A substrate-binding site is contributed by 5–10 (TRNEGK). The Proton acceptor role is filled by aspartate 67. Aspartate 67 serves as a coordination point for Mg(2+). Residues serine 68, 151–154 (FGYD), lysine 174, and 179–180 (HR) each bind substrate.

Belongs to the HAM1 NTPase family. As to quaternary structure, homodimer. Requires Mg(2+) as cofactor.

The catalysed reaction is XTP + H2O = XMP + diphosphate + H(+). It carries out the reaction dITP + H2O = dIMP + diphosphate + H(+). It catalyses the reaction ITP + H2O = IMP + diphosphate + H(+). In terms of biological role, pyrophosphatase that catalyzes the hydrolysis of nucleoside triphosphates to their monophosphate derivatives, with a high preference for the non-canonical purine nucleotides XTP (xanthosine triphosphate), dITP (deoxyinosine triphosphate) and ITP. Seems to function as a house-cleaning enzyme that removes non-canonical purine nucleotides from the nucleotide pool, thus preventing their incorporation into DNA/RNA and avoiding chromosomal lesions. The chain is dITP/XTP pyrophosphatase from Streptococcus pneumoniae serotype 4 (strain ATCC BAA-334 / TIGR4).